A 362-amino-acid polypeptide reads, in one-letter code: Large ribosomal subunit protein uL4A (362 aa).

An N-acetylserine modification is found at Ser2. Position 95 is an omega-N-methylarginine (Arg95). The interval 277–362 (PSHIISTSDV…AVFTETLKHD (86 aa)) is C-terminal-extended nuclear localization signal.

This sequence belongs to the universal ribosomal protein uL4 family. As to quaternary structure, component of the large ribosomal subunit (LSU). Mature yeast ribosomes consist of a small (40S) and a large (60S) subunit. The 40S small subunit contains 1 molecule of ribosomal RNA (18S rRNA) and 33 different proteins (encoded by 57 genes). The large 60S subunit contains 3 rRNA molecules (25S, 5.8S and 5S rRNA) and 46 different proteins (encoded by 81 genes). uL4 is associated with the polypeptide exit tunnel. uL4 interacts with its chaperone ACL4 and the nuclear import receptor KAP104. In terms of processing, N-terminally acetylated by acetyltransferase NatA.

It localises to the cytoplasm. Its subcellular location is the nucleus. Functionally, component of the ribosome, a large ribonucleoprotein complex responsible for the synthesis of proteins in the cell. The small ribosomal subunit (SSU) binds messenger RNAs (mRNAs) and translates the encoded message by selecting cognate aminoacyl-transfer RNA (tRNA) molecules. The large subunit (LSU) contains the ribosomal catalytic site termed the peptidyl transferase center (PTC), which catalyzes the formation of peptide bonds, thereby polymerizing the amino acids delivered by tRNAs into a polypeptide chain. The nascent polypeptides leave the ribosome through a tunnel in the LSU and interact with protein factors that function in enzymatic processing, targeting, and the membrane insertion of nascent chains at the exit of the ribosomal tunnel. uL4 participates in the regulation of the accumulation of its own mRNA. The sequence is that of Large ribosomal subunit protein uL4A from Saccharomyces cerevisiae (strain ATCC 204508 / S288c) (Baker's yeast).